A 621-amino-acid chain; its full sequence is Protein Rep78 (621 aa).

Residues 1–199 enclose the PV NS1-Nuc domain; that stretch reads MPGFYEIVIK…AQHLTHVSQT (199 aa). 3 residues coordinate a divalent metal cation: Glu83, His90, and His92. Positions 90–92 match the RCR-2 motif; sequence HMH. Tyr156 (for nuclease activity) is an active-site residue. An RCR-3 motif is present at residues 156-160; that stretch reads YLLPK. Over residues 196-211 the composition is skewed to polar residues; the sequence is VSQTQEQNKENQNPNS. Positions 196 to 216 are disordered; it reads VSQTQEQNKENQNPNSDAPVI. The 156-residue stretch at 308-463 folds into the SF3 helicase domain; that stretch reads DPQYAASVFL…LDHDFGKVTK (156 aa). 334–341 contributes to the ATP binding site; it reads GPATTGKT. The tract at residues 489–520 is disordered; it reads GGAKKRPAPSDADISEPKRVRESVAQPSTSDA.

In terms of assembly, hexamer when associated with the viral DNA ori sequence. Interacts with host PRKX. Interacts with host TOPORS. Interacts with host TBP and SUB1/PC4; these interactions play important roles in transcriptional regulation. A divalent metal cation is required as a cofactor.

The protein resides in the host nucleus. Functionally, plays an essential role in the initiation of viral DNA synthesis. Binds specifically to an inverted terminal repeat element (ITR) on the 3' and 5' ends of the viral DNA, where it cleaves a site specifically to generate a priming site for initiation of the synthesis of a complementary strand. Also plays a role as transcriptional regulator, DNA helicase and as key factors in site-specific integration of the viral genome. Regulates host PKA activity by interacting with host PRKX as a mechanism of interfering with helper virus propagation and promoting its own replication. Inhibits the host cell cycle G1/S, S and G2/M transitions. These arrests may provide essential cellular factors for viral DNA replication. The chain is Protein Rep78 (Rep78) from Adeno-associated virus 2 (isolate Srivastava/1982) (AAV-2).